Here is a 67-residue protein sequence, read N- to C-terminus: Light-harvesting protein B-870 alpha chain (67 aa).

Position 1 is an N-formylmethionine; in strain DSM 149 and DSM 151 (Met1). Residues 1-12 (MWRIWRLFDPMR) are Cytoplasmic-facing. The chain crosses the membrane as a helical span at residues 13–33 (AMVAQAVFLLGLAVLIHLMLL). Residue His29 coordinates a bacteriochlorophyll. Residues 34 to 67 (GTNKYNWLDGAKKAPAATAVAPVPAEVTSLAQAK) lie on the Periplasmic side of the membrane.

The protein belongs to the antenna complex alpha subunit family. An alpha/beta heterodimer. The core complex is formed by different alpha and beta chains, binding bacteriochlorophyll molecules, and arranged most probably in tetrameric structures disposed around the reaction center. The non-pigmented gamma chains may constitute additional components. In terms of processing, the N-terminus is blocked.

Its subcellular location is the cell inner membrane. Antenna complexes are light-harvesting systems, which transfer the excitation energy to the reaction centers. The polypeptide is Light-harvesting protein B-870 alpha chain (pufA) (Rubrivivax gelatinosus (Rhodocyclus gelatinosus)).